The sequence spans 461 residues: Kynurenine 3-monooxygenase (461 aa).

2 consecutive transmembrane segments (helical) span residues 395–415 and 432–452; these read GFMN…VTFT and ILSN…AIGI.

The protein belongs to the aromatic-ring hydroxylase family. KMO subfamily. FAD serves as cofactor.

Its subcellular location is the mitochondrion. It is found in the membrane. The enzyme catalyses L-kynurenine + NADPH + O2 + H(+) = 3-hydroxy-L-kynurenine + NADP(+) + H2O. Its pathway is cofactor biosynthesis; NAD(+) biosynthesis; quinolinate from L-kynurenine: step 1/3. Functionally, catalyzes the hydroxylation of L-kynurenine (L-Kyn) to form 3-hydroxy-L-kynurenine (L-3OHKyn). Required for synthesis of quinolinic acid. In Caenorhabditis briggsae, this protein is Kynurenine 3-monooxygenase.